Consider the following 218-residue polypeptide: Peptide deformylase 1 (218 aa).

Residues Cys126 and His168 each coordinate Fe cation. The active site involves Glu169. Residue His172 participates in Fe cation binding.

It belongs to the polypeptide deformylase family. Fe(2+) serves as cofactor.

It carries out the reaction N-terminal N-formyl-L-methionyl-[peptide] + H2O = N-terminal L-methionyl-[peptide] + formate. Removes the formyl group from the N-terminal Met of newly synthesized proteins. Requires at least a dipeptide for an efficient rate of reaction. N-terminal L-methionine is a prerequisite for activity but the enzyme has broad specificity at other positions. The chain is Peptide deformylase 1 from Streptomyces coelicolor (strain ATCC BAA-471 / A3(2) / M145).